The sequence spans 662 residues: PsbB mRNA maturation factor Mbb1, chloroplastic (662 aa).

A chloroplast-targeting transit peptide spans 1–50 (MSLVPFSQLWRGVRTRGPVEQASSSSSSSSSSRRTWYAPARSQTGVQVAA). 2 disordered regions span residues 14–38 (RTRG…TWYA) and 75–101 (IIAD…RDEA). A compositionally biased stretch (low complexity) spans 23–32 (SSSSSSSSSS). Basic and acidic residues predominate over residues 88–101 (EGERGDATGSRDEA). TPR repeat units follow at residues 126 to 160 (SRIR…DPAD), 161 to 194 (PRAY…TGNV), 196 to 229 (PYIW…DGTH), 231 to 263 (CAWH…CRRK), 269 to 302 (AYLY…AEGA), 305 to 338 (VALW…NPRS), 339 to 372 (RYVH…NPTD), 373 to 406 (PALY…DPSD), 408 to 440 (YMWQ…DPRS), and 444 to 477 (VYVF…DPKS). 2 disordered regions span residues 540–563 (SDGN…EAAA) and 598–662 (LPDF…RSMG).

Part of a 300 kDa complex that associates with RNA.

It localises to the plastid. The protein resides in the chloroplast stroma. Involved, directly or indirectly, in the processing of the chloroplast encoded psbB mRNA to its mature form, acting via the 5'-UTR of the psbB mRNA. The sequence is that of PsbB mRNA maturation factor Mbb1, chloroplastic (MBB1) from Chlamydomonas reinhardtii (Chlamydomonas smithii).